We begin with the raw amino-acid sequence, 145 residues long: Endosomal/vacuolar adapter protein YPT35 (145 aa).

Residues 32–145 (ISDVLVGEHH…STVVREFVLG (114 aa)) form the PX domain.

This sequence belongs to the YPT35 family.

It is found in the endosome membrane. The protein resides in the vacuole membrane. Its function is as follows. Recruits the lipid transfer protein VPS13 to endosomal and vacuolar membranes. This Meyerozyma guilliermondii (strain ATCC 6260 / CBS 566 / DSM 6381 / JCM 1539 / NBRC 10279 / NRRL Y-324) (Yeast) protein is Endosomal/vacuolar adapter protein YPT35 (YPT35).